Reading from the N-terminus, the 233-residue chain is Orotidine 5'-phosphate decarboxylase (233 aa).

Residues Asp-13, Lys-35, Asp-62–Thr-71, Thr-122, Arg-182, Gln-191, Gly-211, and Arg-212 each bind substrate. Lys-64 (proton donor) is an active-site residue.

Belongs to the OMP decarboxylase family. Type 1 subfamily. As to quaternary structure, homodimer.

It carries out the reaction orotidine 5'-phosphate + H(+) = UMP + CO2. The protein operates within pyrimidine metabolism; UMP biosynthesis via de novo pathway; UMP from orotate: step 2/2. Functionally, catalyzes the decarboxylation of orotidine 5'-monophosphate (OMP) to uridine 5'-monophosphate (UMP). This chain is Orotidine 5'-phosphate decarboxylase, found in Pseudomonas fluorescens (strain ATCC BAA-477 / NRRL B-23932 / Pf-5).